The primary structure comprises 1147 residues: MKIMEDQINPINIRKQKDLDDNLEEITSENSEIAPADIEKKMLENHAYPSPTQEDFQRAIYVKRDFYIHSIPERKVLNTYDEIKEFRDNKCAGNFKLTESQTLLSNFINPNTPYRGLLMFWGTGVGKSCGAIAIAEKFKHMVEKYGTKIHVLVPGPINKQNFLNEIIKCTGETYTKMFQDKTIVINEAEKNRIRKNALNVVNQYYRIMSYRSFYKKVLGEKIRDKVVTGNKVKLTSRKTETGEFERDISIDRIYSLDNTLLIVDEAHNITGNGEGDAVKKIIDVSKNLKVVFLSATPMKNLADSIVELINYLRPKNYQMERDKIFTSQRGSEMDFKPGGRDYLRKMVRGYVSYLRGADPLTFAERVDIGEIPPGLDFTKVTRCFMLPFQLGVYDNVIATQDDSLDRNSEAVANFVFPGLSKDRNSKNIEGYYGIKGMNEIRNQILNNSETLNRRIASTILSEYEIEDPSNLMYLTDNNSVISGNIFNEKYLKHFSIKFYSALQKINETVYGKRNSGLIFIYLNLVRVGISIFQEVLLMNGYLEYQENTNNYNLKRDTRCYFCDHKYGDHYNLPDDIPKHDFYPATFITVTGKSEEDIEQIPEEKHRILNNVFNNVNNREGKYLKIVIGSRVMNEGITLRNIKEIYILDVHFNLGKVDQAIGRGIRFCTHYGITNEKDPFPKVEVNKYVVSVKNGLSTEEQLYKKAESKYKLIKQVERILQEEAIDCPLNRNGNIFPEEMKRYANCGTKDNPCPAICGYMPCEFKCGDKLLNAKYYDPDRAVYKKITKSELDYSTYNNALASDEIDYSKAKIKEMYKLDFIYTLKDILRYVKKSYPVEKREMFDDFYVYQALNDLIPITGNDFNNFHDTIADKYNRPGYLIYINTYYIFQPFDENENIPMYYRRIFTPPTINKINVKDYIKNTPEYRQHKNLYQLDEEGPIDREYDFDSVQDYYDSRDEFDYVGIIDRESSKRKNGTNSSGDEFKIRRKRPKILSKKRETGIPSFLGAVCSTSKDKKYLASIMKKLNLDENKSDSRMDICDRIKNKLFDLEKYSTNNMTYLIIPSNHPHIPFPLNLKDRVQYIIDQIKRETRSSINPEIKTIKTTGEFNDIDYIYYELYYDSSMDKYQDILTLYGAKKINNDWIIIIK.

The Helicase ATP-binding domain occupies I108–K315. W121–S128 contributes to the ATP binding site. The DEAH box motif lies at D264–H267.

Belongs to the DEAD box helicase family. DEAH subfamily.

It is found in the virion. The catalysed reaction is ATP + H2O = ADP + phosphate + H(+). The chain is Putative ATP-dependent RNA helicase L377 from Acanthamoeba polyphaga (Amoeba).